A 53-amino-acid polypeptide reads, in one-letter code: MAIKRGVRLQCNESKSINYITTKNAKNNPDRLSLNKFCPKCRKVTTHVEIKKK.

It belongs to the bacterial ribosomal protein bL33 family.

This is Large ribosomal subunit protein bL33 from Ureaplasma parvum serovar 3 (strain ATCC 27815 / 27 / NCTC 11736).